We begin with the raw amino-acid sequence, 329 residues long: Aspartate carbamoyltransferase catalytic subunit (329 aa).

2 residues coordinate carbamoyl phosphate: Arg63 and Thr64. Lys91 contacts L-aspartate. Carbamoyl phosphate is bound by residues Arg113, His141, and Gln144. Arg179 and Arg234 together coordinate L-aspartate. Positions 275 and 276 each coordinate carbamoyl phosphate.

It belongs to the aspartate/ornithine carbamoyltransferase superfamily. ATCase family. Heterododecamer (2C3:3R2) of six catalytic PyrB chains organized as two trimers (C3), and six regulatory PyrI chains organized as three dimers (R2).

The enzyme catalyses carbamoyl phosphate + L-aspartate = N-carbamoyl-L-aspartate + phosphate + H(+). It participates in pyrimidine metabolism; UMP biosynthesis via de novo pathway; (S)-dihydroorotate from bicarbonate: step 2/3. In terms of biological role, catalyzes the condensation of carbamoyl phosphate and aspartate to form carbamoyl aspartate and inorganic phosphate, the committed step in the de novo pyrimidine nucleotide biosynthesis pathway. The sequence is that of Aspartate carbamoyltransferase catalytic subunit from Magnetococcus marinus (strain ATCC BAA-1437 / JCM 17883 / MC-1).